Reading from the N-terminus, the 156-residue chain is Protein-export protein SecB (156 aa).

Belongs to the SecB family. As to quaternary structure, homotetramer, a dimer of dimers. One homotetramer interacts with 1 SecA dimer.

It localises to the cytoplasm. Functionally, one of the proteins required for the normal export of preproteins out of the cell cytoplasm. It is a molecular chaperone that binds to a subset of precursor proteins, maintaining them in a translocation-competent state. It also specifically binds to its receptor SecA. In Aeromonas hydrophila subsp. hydrophila (strain ATCC 7966 / DSM 30187 / BCRC 13018 / CCUG 14551 / JCM 1027 / KCTC 2358 / NCIMB 9240 / NCTC 8049), this protein is Protein-export protein SecB.